Reading from the N-terminus, the 280-residue chain is 2-dehydro-3-deoxyphosphooctonate aldolase (280 aa).

The protein belongs to the KdsA family.

The protein resides in the cytoplasm. It catalyses the reaction D-arabinose 5-phosphate + phosphoenolpyruvate + H2O = 3-deoxy-alpha-D-manno-2-octulosonate-8-phosphate + phosphate. It participates in carbohydrate biosynthesis; 3-deoxy-D-manno-octulosonate biosynthesis; 3-deoxy-D-manno-octulosonate from D-ribulose 5-phosphate: step 2/3. It functions in the pathway bacterial outer membrane biogenesis; lipopolysaccharide biosynthesis. The protein is 2-dehydro-3-deoxyphosphooctonate aldolase of Coxiella burnetii (strain CbuK_Q154) (Coxiella burnetii (strain Q154)).